Consider the following 553-residue polypeptide: Serine/threonine-protein kinase WNG2 (553 aa).

Disordered regions lie at residues 1–20 and 88–107; these read MMFP…RLQR and NREP…GGAE. An N-terminal signal peptide occupies residues 1–64; the sequence is MMFPAVAAPP…GLSWVSVAVA (64 aa). The Protein kinase domain maps to 125–395; sequence FKQLRPVDEF…IGEVMEDPFF (271 aa). Lys186 serves as a coordination point for ATP. Asp278 functions as the Proton acceptor in the catalytic mechanism. The interval 432-553 is disordered; the sequence is REKADAAAKA…GFNKEDAQES (122 aa). Low complexity predominate over residues 438 to 451; that stretch reads AAKAADNAEVPAAK. Composition is skewed to basic and acidic residues over residues 465-486, 494-524, and 531-553; these read GDRD…EKGR, EGNH…ENRE, and QREE…AQES.

This sequence belongs to the protein kinase superfamily. STE Ser/Thr protein kinase family. WNG subfamily. Requires Mg(2+) as cofactor.

It is found in the cytoplasmic granule. The protein localises to the secreted. It localises to the parasitophorous vacuole lumen. The catalysed reaction is L-seryl-[protein] + ATP = O-phospho-L-seryl-[protein] + ADP + H(+). It catalyses the reaction L-threonyl-[protein] + ATP = O-phospho-L-threonyl-[protein] + ADP + H(+). Its function is as follows. Probable serine/threonine-protein kinase. This chain is Serine/threonine-protein kinase WNG2, found in Toxoplasma gondii.